The primary structure comprises 332 residues: 2,3-diketo-L-gulonate reductase (332 aa).

Catalysis depends on His44, which acts as the Proton donor. Residues 168-174 (ITMVDMS), 224-225 (WK), and 304-306 (GHE) contribute to the NAD(+) site.

The protein belongs to the LDH2/MDH2 oxidoreductase family. DlgD subfamily. In terms of assembly, homodimer.

The protein localises to the cytoplasm. The enzyme catalyses 3-dehydro-L-gulonate + NAD(+) = 2,3-dioxo-L-gulonate + NADH + H(+). It catalyses the reaction 3-dehydro-L-gulonate + NADP(+) = 2,3-dioxo-L-gulonate + NADPH + H(+). In terms of biological role, catalyzes the reduction of 2,3-diketo-L-gulonate in the presence of NADH, to form 3-keto-L-gulonate. This is 2,3-diketo-L-gulonate reductase from Escherichia coli O81 (strain ED1a).